We begin with the raw amino-acid sequence, 256 residues long: uncharacterized protein (256 aa).

The signal sequence occupies residues 1–24 (MIKRVNKLVLGISFLFLIISIFAG). The N-palmitoyl cysteine moiety is linked to residue Cys25. Residue Cys25 is the site of S-diacylglycerol cysteine attachment.

Belongs to the staphylococcal tandem lipoprotein family.

It is found in the cell membrane. This is an uncharacterized protein from Staphylococcus aureus (strain Mu50 / ATCC 700699).